Reading from the N-terminus, the 72-residue chain is Large ribosomal subunit protein uL29 (72 aa).

This sequence belongs to the universal ribosomal protein uL29 family.

The protein is Large ribosomal subunit protein uL29 of Thermus thermophilus (strain ATCC BAA-163 / DSM 7039 / HB27).